The following is a 272-amino-acid chain: NH(3)-dependent NAD(+) synthetase (272 aa).

45 to 52 contacts ATP; it reads GISGGQDS. Position 51 (aspartate 51) interacts with Mg(2+). Arginine 138 provides a ligand contact to deamido-NAD(+). Threonine 158 serves as a coordination point for ATP. Residue glutamate 163 coordinates Mg(2+). The deamido-NAD(+) site is built by lysine 171 and aspartate 178. ATP is bound by residues lysine 187 and threonine 209. Residue 258-259 coordinates deamido-NAD(+); the sequence is HK.

The protein belongs to the NAD synthetase family. As to quaternary structure, homodimer.

The enzyme catalyses deamido-NAD(+) + NH4(+) + ATP = AMP + diphosphate + NAD(+) + H(+). It functions in the pathway cofactor biosynthesis; NAD(+) biosynthesis; NAD(+) from deamido-NAD(+) (ammonia route): step 1/1. Catalyzes the ATP-dependent amidation of deamido-NAD to form NAD. Uses ammonia as a nitrogen source. The sequence is that of NH(3)-dependent NAD(+) synthetase from Bacillus velezensis (strain DSM 23117 / BGSC 10A6 / LMG 26770 / FZB42) (Bacillus amyloliquefaciens subsp. plantarum).